The primary structure comprises 316 residues: UPF0613 protein PB24D3.06c (316 aa).

Belongs to the UPF0613 family.

The protein resides in the cytoplasm. It localises to the nucleus. The polypeptide is UPF0613 protein PB24D3.06c (Schizosaccharomyces pombe (strain 972 / ATCC 24843) (Fission yeast)).